Consider the following 432-residue polypeptide: Guanine/hypoxanthine permease PbuO (432 aa).

10 helical membrane passes run 15–35 (IIAG…NPVI), 51–71 (IIAS…PIAI), 92–112 (GITY…FIIL), 133–153 (ITTG…GIVA), 174–194 (LVGL…ALFI), 196–216 (MAAT…KGFM), 234–254 (FGDV…LVTI), 340–360 (ALSG…SLMM), 379–399 (LVIL…LGFI), and 412–432 (REIH…LFIL).

The protein belongs to the nucleobase:cation symporter-2 (NCS2) (TC 2.A.40) family. Azg-like subfamily.

It localises to the cell membrane. Its function is as follows. Involved in the uptake of the purine bases hypoxanthine and guanine. May work at purine concentrations higher than 100 uM. This is Guanine/hypoxanthine permease PbuO (pbuO) from Bacillus subtilis (strain 168).